A 258-amino-acid polypeptide reads, in one-letter code: MLVVVSPAKTLDYESPLATERFSQPEFVEHSAELIEVCRKLTPADVSALMKVSDKIAGLNVARFEQWSETFTQENARQAILAFKGDVYTGLDAETLSDDDFDYAQNHLRMLSGLYGLLKPLDLMQPYRLEMGTRLANERGTNLYQFWGNIITDKLNEALNAQGDNVLINLASNEYFKAVKPKSLDGQIITPVFKDCKNGQYKVISFYAKKARGMMARYIIENKIDSVEALTRFDTAGYYFVEEESNAKELVFKREEQN.

This sequence belongs to the UPF0246 family.

The chain is UPF0246 protein VS_0505 from Vibrio atlanticus (strain LGP32) (Vibrio splendidus (strain Mel32)).